A 120-amino-acid polypeptide reads, in one-letter code: NAD(P)H-quinone oxidoreductase subunit 3, chloroplastic (120 aa).

A run of 3 helical transmembrane segments spans residues 9 to 29, 64 to 84, and 88 to 108; these read IFWT…WISG, MFAL…PWAM, and VLGV…VVGL.

Belongs to the complex I subunit 3 family. In terms of assembly, NDH is composed of at least 16 different subunits, 5 of which are encoded in the nucleus.

The protein localises to the plastid. It is found in the chloroplast thylakoid membrane. It catalyses the reaction a plastoquinone + NADH + (n+1) H(+)(in) = a plastoquinol + NAD(+) + n H(+)(out). It carries out the reaction a plastoquinone + NADPH + (n+1) H(+)(in) = a plastoquinol + NADP(+) + n H(+)(out). Functionally, NDH shuttles electrons from NAD(P)H:plastoquinone, via FMN and iron-sulfur (Fe-S) centers, to quinones in the photosynthetic chain and possibly in a chloroplast respiratory chain. The immediate electron acceptor for the enzyme in this species is believed to be plastoquinone. Couples the redox reaction to proton translocation, and thus conserves the redox energy in a proton gradient. This chain is NAD(P)H-quinone oxidoreductase subunit 3, chloroplastic, found in Lolium perenne (Perennial ryegrass).